Here is a 466-residue protein sequence, read N- to C-terminus: Hydroxyproline dehydrogenase (466 aa).

This sequence belongs to the proline oxidase family. FAD serves as cofactor.

The enzyme catalyses trans-4-hydroxy-L-proline + a quinone = (3R,5S)-1-pyrroline-3-hydroxy-5-carboxylate + a quinol + H(+). It carries out the reaction L-proline + a quinone = (S)-1-pyrroline-5-carboxylate + a quinol + H(+). The protein operates within amino-acid degradation; L-proline degradation into L-glutamate; L-glutamate from L-proline: step 1/2. In terms of biological role, dehydrogenase that converts trans-4-L-hydroxyproline to delta-1-pyrroline-3-hydroxy-5-carboxylate (Hyp) using a quinone as the terminal electron acceptor. Can also use proline as a substrate but with a very much lower efficiency. Does not react with other diastereomers of Hyp: trans-4-D-hydroxyproline and cis-4-L-hydroxyproline. This chain is Hydroxyproline dehydrogenase (prodh2), found in Xenopus laevis (African clawed frog).